Here is a 242-residue protein sequence, read N- to C-terminus: MRFFHFYTPEQVPSSGIPECAVAIDVLRATTTIATALAAGAEAVQVFAHLQQLQEASQNWPASQRLLAGERGGKAVAGFDLGNSPLDYTPDRVRDKRIFLSTTNGTRSLQRLEGIPVVITAALVNLGAVVDFLRRGSFAEVWLVGSGWEGAFSLEDTACAGAILHRLGCSLNQLGNDETLAALALYQTWQDDLLGLLRRSSHGQRLLGLGPENDQDLAYCADLDRLSVVPRQVQPGVLASGG.

The protein belongs to the ComB family. Mg(2+) is required as a cofactor.

It catalyses the reaction (2R)-O-phospho-3-sulfolactate + H2O = (2R)-3-sulfolactate + phosphate. In Synechococcus sp. (strain JA-2-3B'a(2-13)) (Cyanobacteria bacterium Yellowstone B-Prime), this protein is Probable 2-phosphosulfolactate phosphatase.